Here is a 190-residue protein sequence, read N- to C-terminus: Large ribosomal subunit protein bL9 (190 aa).

This sequence belongs to the bacterial ribosomal protein bL9 family.

Its function is as follows. Binds to the 23S rRNA. This is Large ribosomal subunit protein bL9 from Rhodobacter capsulatus (strain ATCC BAA-309 / NBRC 16581 / SB1003).